The chain runs to 91 residues: Small ribosomal subunit protein uS17 (91 aa).

This sequence belongs to the universal ribosomal protein uS17 family. In terms of assembly, part of the 30S ribosomal subunit.

In terms of biological role, one of the primary rRNA binding proteins, it binds specifically to the 5'-end of 16S ribosomal RNA. The sequence is that of Small ribosomal subunit protein uS17 from Salinispora tropica (strain ATCC BAA-916 / DSM 44818 / JCM 13857 / NBRC 105044 / CNB-440).